Consider the following 422-residue polypeptide: Serine hydroxymethyltransferase (422 aa).

(6S)-5,6,7,8-tetrahydrofolate contacts are provided by residues leucine 118 and 122–124; that span reads GHL. Residue lysine 227 is modified to N6-(pyridoxal phosphate)lysine. (6S)-5,6,7,8-tetrahydrofolate is bound by residues glutamate 243 and 351–353; that span reads SPF.

The protein belongs to the SHMT family. Homodimer. The cofactor is pyridoxal 5'-phosphate.

It localises to the cytoplasm. It carries out the reaction (6R)-5,10-methylene-5,6,7,8-tetrahydrofolate + glycine + H2O = (6S)-5,6,7,8-tetrahydrofolate + L-serine. The protein operates within one-carbon metabolism; tetrahydrofolate interconversion. Its pathway is amino-acid biosynthesis; glycine biosynthesis; glycine from L-serine: step 1/1. Its function is as follows. Catalyzes the reversible interconversion of serine and glycine with tetrahydrofolate (THF) serving as the one-carbon carrier. This reaction serves as the major source of one-carbon groups required for the biosynthesis of purines, thymidylate, methionine, and other important biomolecules. Also exhibits THF-independent aldolase activity toward beta-hydroxyamino acids, producing glycine and aldehydes, via a retro-aldol mechanism. This is Serine hydroxymethyltransferase from Fervidobacterium nodosum (strain ATCC 35602 / DSM 5306 / Rt17-B1).